The sequence spans 153 residues: Aspartate carbamoyltransferase regulatory chain (153 aa).

4 residues coordinate Zn(2+): C109, C114, C138, and C141.

This sequence belongs to the PyrI family. As to quaternary structure, contains catalytic and regulatory chains. Zn(2+) serves as cofactor.

Its function is as follows. Involved in allosteric regulation of aspartate carbamoyltransferase. In Salmonella arizonae (strain ATCC BAA-731 / CDC346-86 / RSK2980), this protein is Aspartate carbamoyltransferase regulatory chain.